The chain runs to 109 residues: Flagellar transcriptional regulator FlhD (109 aa).

This sequence belongs to the FlhD family. Homodimer; disulfide-linked. Forms a heterohexamer composed of two FlhC and four FlhD subunits. Each FlhC binds a FlhD dimer, forming a heterotrimer, and a hexamer assembles by dimerization of two heterotrimers.

It is found in the cytoplasm. In terms of biological role, functions in complex with FlhC as a master transcriptional regulator that regulates transcription of several flagellar and non-flagellar operons by binding to their promoter region. Activates expression of class 2 flagellar genes, including fliA, which is a flagellum-specific sigma factor that turns on the class 3 genes. Also regulates genes whose products function in a variety of physiological pathways. The protein is Flagellar transcriptional regulator FlhD of Acidovorax sp. (strain JS42).